The following is an 86-amino-acid chain: Large ribosomal subunit protein uL24 (86 aa).

This sequence belongs to the universal ribosomal protein uL24 family. In terms of assembly, part of the 50S ribosomal subunit.

Functionally, one of two assembly initiator proteins, it binds directly to the 5'-end of the 23S rRNA, where it nucleates assembly of the 50S subunit. In terms of biological role, one of the proteins that surrounds the polypeptide exit tunnel on the outside of the subunit. The polypeptide is Large ribosomal subunit protein uL24 (Bdellovibrio bacteriovorus (strain ATCC 15356 / DSM 50701 / NCIMB 9529 / HD100)).